The following is a 467-amino-acid chain: Uronate isomerase (467 aa).

This sequence belongs to the metallo-dependent hydrolases superfamily. Uronate isomerase family.

It carries out the reaction D-glucuronate = D-fructuronate. It catalyses the reaction aldehydo-D-galacturonate = keto-D-tagaturonate. It participates in carbohydrate metabolism; pentose and glucuronate interconversion. This is Uronate isomerase from Geobacillus thermodenitrificans (strain NG80-2).